The following is a 91-amino-acid chain: Acylphosphatase (91 aa).

The Acylphosphatase-like domain occupies 3–91; the sequence is KLRMNVQGRV…EETEQFKVIQ (89 aa). Catalysis depends on residues Arg-18 and Asn-36.

Belongs to the acylphosphatase family.

It carries out the reaction an acyl phosphate + H2O = a carboxylate + phosphate + H(+). The chain is Acylphosphatase (acyP) from Enterococcus faecalis (strain ATCC 700802 / V583).